A 1185-amino-acid chain; its full sequence is Mucin-6 (1185 aa).

2 disulfides stabilise this stretch: C1/C132 and C23/C168. One can recognise a VWFD 1 domain in the interval 1-169 (CSTWGGGHFS…KMDDPSEICL (169 aa)). N223 carries N-linked (GlcNAc...) (complex) asparagine glycosylation. A TIL 1 domain is found at 257–312 (CSANQIYEECGSPCIKTCSNPEYSCSSHCTYGCFCPEGTVLDDISKNRTCVHLEQC). In terms of domain architecture, VWFD 2 spans 350-534 (GRCSLEGGSF…AMERETDPCA (185 aa)). Cystine bridges form between C352-C488 and C374-C533. 2 consecutive TIL domains span residues 619–676 (CTGN…KSHC) and 737–782 (GATC…PEEC). The VWFD 3 domain occupies 821–993 (STCNLYGEGH…NSWKENPLCG (173 aa)). 4 disulfides stabilise this stretch: C823–C957, C845–C992, C854–C954, and C872–C879. N-linked (GlcNAc...) (complex) asparagine glycosylation occurs at N930. A compositionally biased stretch (low complexity) spans 1160-1178 (PTATQPTSPSTSSASTVLT). Residues 1160–1185 (PTATQPTSPSTSSASTVLTETTNPPV) are disordered.

As to quaternary structure, multimer; disulfide-linked. In terms of processing, N-glycosylated with N-acetylglucosamine (6.7%), N-acetylgalactosamine (0.6%), galactose (1.8%), mannose (4.6%), N-acetylneuraminic acid (1.0%) and sulfate-containing glycans (0.7%).

It is found in the secreted. Its function is as follows. Ovomucin, the glycoprotein responsible for the gel properties of egg white, is composed for 2 subunits, alpha-ovomucin/MUC5B and beta-ovomucin/MUC6. This chain is Mucin-6 (MUC6), found in Gallus gallus (Chicken).